We begin with the raw amino-acid sequence, 265 residues long: Mlc titration factor A (265 aa).

The Zn(2+) site is built by H111, H148, H152, and E211.

The protein belongs to the MtfA family. Interacts with Mlc. It depends on Zn(2+) as a cofactor.

The protein resides in the cytoplasm. Its function is as follows. Involved in the modulation of the activity of the glucose-phosphotransferase system (glucose-PTS). Interacts with the transcriptional repressor Mlc, preventing its interaction with DNA and leading to the modulation of expression of genes regulated by Mlc, including ptsG, which encodes the PTS system glucose-specific EIICB component. Functionally, shows zinc-dependent metallopeptidase activity. This chain is Mlc titration factor A, found in Cronobacter sakazakii (strain ATCC BAA-894) (Enterobacter sakazakii).